Reading from the N-terminus, the 239-residue chain is 1-(5-phosphoribosyl)-5-[(5-phosphoribosylamino)methylideneamino] imidazole-4-carboxamide isomerase (239 aa).

The active-site Proton acceptor is D12. Residue D133 is the Proton donor of the active site.

It belongs to the HisA/HisF family.

The protein resides in the cytoplasm. The catalysed reaction is 1-(5-phospho-beta-D-ribosyl)-5-[(5-phospho-beta-D-ribosylamino)methylideneamino]imidazole-4-carboxamide = 5-[(5-phospho-1-deoxy-D-ribulos-1-ylimino)methylamino]-1-(5-phospho-beta-D-ribosyl)imidazole-4-carboxamide. It participates in amino-acid biosynthesis; L-histidine biosynthesis; L-histidine from 5-phospho-alpha-D-ribose 1-diphosphate: step 4/9. In Sulfurihydrogenibium sp. (strain YO3AOP1), this protein is 1-(5-phosphoribosyl)-5-[(5-phosphoribosylamino)methylideneamino] imidazole-4-carboxamide isomerase.